The sequence spans 378 residues: GDP-mannose-dependent alpha-mannosyltransferase (378 aa).

The protein belongs to the glycosyltransferase group 1 family. Glycosyltransferase 4 subfamily.

It functions in the pathway phospholipid metabolism; phosphatidylinositol metabolism. Catalyzes the addition of a mannose residue from GDP-D-mannose to GlcAGroAc2 to generate 1,2-di-O-C16/C18:1-(alpha-D-mannopyranosyl)-(1-4)-(alpha-D-glucopyranosyluronic acid)-(1-3)-glycerol(ManGlcAGroAc2). The polypeptide is GDP-mannose-dependent alpha-mannosyltransferase (mgtA) (Mycobacterium tuberculosis (strain CDC 1551 / Oshkosh)).